A 268-amino-acid polypeptide reads, in one-letter code: 4-hydroxy-tetrahydrodipicolinate reductase (268 aa).

Residue 8–13 (GAAGRM) coordinates NAD(+). Arg-36 contributes to the NADP(+) binding site. Residues 99-101 (GTT) and 123-126 (AANF) each bind NAD(+). His-156 (proton donor/acceptor) is an active-site residue. His-157 contributes to the (S)-2,3,4,5-tetrahydrodipicolinate binding site. Lys-160 serves as the catalytic Proton donor. 166 to 167 (GT) is a binding site for (S)-2,3,4,5-tetrahydrodipicolinate.

This sequence belongs to the DapB family.

It is found in the cytoplasm. It catalyses the reaction (S)-2,3,4,5-tetrahydrodipicolinate + NAD(+) + H2O = (2S,4S)-4-hydroxy-2,3,4,5-tetrahydrodipicolinate + NADH + H(+). The catalysed reaction is (S)-2,3,4,5-tetrahydrodipicolinate + NADP(+) + H2O = (2S,4S)-4-hydroxy-2,3,4,5-tetrahydrodipicolinate + NADPH + H(+). Its pathway is amino-acid biosynthesis; L-lysine biosynthesis via DAP pathway; (S)-tetrahydrodipicolinate from L-aspartate: step 4/4. Catalyzes the conversion of 4-hydroxy-tetrahydrodipicolinate (HTPA) to tetrahydrodipicolinate. This Pseudomonas fluorescens (strain Pf0-1) protein is 4-hydroxy-tetrahydrodipicolinate reductase.